A 562-amino-acid chain; its full sequence is Membrane protein insertase YidC (562 aa).

A helical membrane pass occupies residues 4-24; that stretch reads QRIFLFLALSILGLLLWTSWE. Residues 33–71 are disordered; the sequence is TEEVVEAEDDVPAPAETPDEAPDPADGETPARDRAEVED. Positions 35 to 58 are enriched in acidic residues; sequence EVVEAEDDVPAPAETPDEAPDPAD. The segment covering 61 to 71 has biased composition (basic and acidic residues); the sequence is TPARDRAEVED. A run of 4 helical transmembrane segments spans residues 330-350, 356-376, 426-446, and 499-519; these read MTLS…FWLL, IVGN…LAFY, LGGC…YWVL, and IMMA…AGLV.

The protein belongs to the OXA1/ALB3/YidC family. Type 1 subfamily. As to quaternary structure, interacts with the Sec translocase complex via SecD. Specifically interacts with transmembrane segments of nascent integral membrane proteins during membrane integration.

Its subcellular location is the cell inner membrane. Required for the insertion and/or proper folding and/or complex formation of integral membrane proteins into the membrane. Involved in integration of membrane proteins that insert both dependently and independently of the Sec translocase complex, as well as at least some lipoproteins. Aids folding of multispanning membrane proteins. This chain is Membrane protein insertase YidC, found in Alkalilimnicola ehrlichii (strain ATCC BAA-1101 / DSM 17681 / MLHE-1).